The sequence spans 101 residues: Isochorismate pyruvate lyase (101 aa).

Residues 4–94 (PEDCTGLADI…WYIAEQIKYW (91 aa)) enclose the Chorismate mutase domain. Residues arginine 14, arginine 31, lysine 42, and glutamine 90 each contribute to the substrate site.

Dimer of dimers.

The enzyme catalyses isochorismate = salicylate + pyruvate. It catalyses the reaction chorismate = prephenate. It functions in the pathway siderophore biosynthesis; salicylate biosynthesis. Inhibited by endo-oxabicyclic diacid resembling to the conformation of the transition state. Functionally, involved in the incorporation of salicylate into the siderophore pyochelin. Catalyzes the elimination of the enolpyruvyl side chain from isochorismate to yield salicylate and pyruvate via a rare pericyclic hydrogen transfer mechanism from C2 to C5. PchB also catalyzes the nonphysiological Claisen rearrangement of chorismate to prephenate in which the pyruvylenol tail is transferred from a C3 ether linkage to a C1-C9 linkage. In Pseudomonas aeruginosa (strain ATCC 15692 / DSM 22644 / CIP 104116 / JCM 14847 / LMG 12228 / 1C / PRS 101 / PAO1), this protein is Isochorismate pyruvate lyase.